A 115-amino-acid chain; its full sequence is Large ribosomal subunit protein bL20 (115 aa).

This sequence belongs to the bacterial ribosomal protein bL20 family.

Its function is as follows. Binds directly to 23S ribosomal RNA and is necessary for the in vitro assembly process of the 50S ribosomal subunit. It is not involved in the protein synthesizing functions of that subunit. The protein is Large ribosomal subunit protein bL20 of Prochlorococcus marinus subsp. pastoris (strain CCMP1986 / NIES-2087 / MED4).